Consider the following 446-residue polypeptide: Exodeoxyribonuclease 7 large subunit (446 aa).

It belongs to the XseA family. Heterooligomer composed of large and small subunits.

It localises to the cytoplasm. It catalyses the reaction Exonucleolytic cleavage in either 5'- to 3'- or 3'- to 5'-direction to yield nucleoside 5'-phosphates.. In terms of biological role, bidirectionally degrades single-stranded DNA into large acid-insoluble oligonucleotides, which are then degraded further into small acid-soluble oligonucleotides. The sequence is that of Exodeoxyribonuclease 7 large subunit from Streptococcus pyogenes serotype M3 (strain ATCC BAA-595 / MGAS315).